Here is a 351-residue protein sequence, read N- to C-terminus: DNA polymerase IV (351 aa).

The 181-residue stretch at 4-184 folds into the UmuC domain; it reads FIHIDMDCFY…LPLGKIPGVG (181 aa). Positions 8 and 102 each coordinate Mg(2+). Glu103 is an active-site residue.

Belongs to the DNA polymerase type-Y family. Monomer. The cofactor is Mg(2+).

The protein resides in the cytoplasm. It carries out the reaction DNA(n) + a 2'-deoxyribonucleoside 5'-triphosphate = DNA(n+1) + diphosphate. Its function is as follows. Poorly processive, error-prone DNA polymerase involved in untargeted mutagenesis. Copies undamaged DNA at stalled replication forks, which arise in vivo from mismatched or misaligned primer ends. These misaligned primers can be extended by PolIV. Exhibits no 3'-5' exonuclease (proofreading) activity. May be involved in translesional synthesis, in conjunction with the beta clamp from PolIII. The sequence is that of DNA polymerase IV from Pseudoalteromonas translucida (strain TAC 125).